Here is a 179-residue protein sequence, read N- to C-terminus: ATP synthase subunit delta (179 aa).

The protein belongs to the ATPase delta chain family. As to quaternary structure, F-type ATPases have 2 components, F(1) - the catalytic core - and F(0) - the membrane proton channel. F(1) has five subunits: alpha(3), beta(3), gamma(1), delta(1), epsilon(1). F(0) has three main subunits: a(1), b(2) and c(10-14). The alpha and beta chains form an alternating ring which encloses part of the gamma chain. F(1) is attached to F(0) by a central stalk formed by the gamma and epsilon chains, while a peripheral stalk is formed by the delta and b chains.

The protein localises to the cell inner membrane. Functionally, f(1)F(0) ATP synthase produces ATP from ADP in the presence of a proton or sodium gradient. F-type ATPases consist of two structural domains, F(1) containing the extramembraneous catalytic core and F(0) containing the membrane proton channel, linked together by a central stalk and a peripheral stalk. During catalysis, ATP synthesis in the catalytic domain of F(1) is coupled via a rotary mechanism of the central stalk subunits to proton translocation. This protein is part of the stalk that links CF(0) to CF(1). It either transmits conformational changes from CF(0) to CF(1) or is implicated in proton conduction. This is ATP synthase subunit delta from Burkholderia orbicola (strain MC0-3).